A 791-amino-acid polypeptide reads, in one-letter code: Splicing factor 3A subunit 1 (791 aa).

Residues 1–41 (MQAGPVQAVPPPPPVATESKQPIEEEASSKEDPTPSKPVVG) are disordered. Residue lysine 20 forms a Glycyl lysine isopeptide (Lys-Gly) (interchain with G-Cter in SUMO2) linkage. Over residues 21 to 34 (QPIEEEASSKEDPT) the composition is skewed to basic and acidic residues. Residues 52–94 (IVDKTASFVARNGPEFEARIRQNEINNPKFNFLNPNDPYHAYY) form an SURP motif 1 repeat. At lysine 55 the chain carries N6-acetyllysine. A Glycyl lysine isopeptide (Lys-Gly) (interchain with G-Cter in SUMO2) cross-link involves residue lysine 131. Residues 166 to 208 (VVKLTAQFVARNGRQFLTQLMQKEQRNYQFDFLRPQHSLFNYF) form an SURP motif 2 repeat. Residues 318-411 (GESEEVEMEV…APAPDEYLVS (94 aa)) are disordered. Phosphoserine is present on residues serine 320 and serine 329. The span at 320–336 (SEEVEMEVESDEEDQEK) shows a compositional bias: acidic residues. Polar residues predominate over residues 340 to 351 (TPSQLDQDTQVQ). Residues 352–362 (DMDEGSDDEEE) show a composition bias toward acidic residues. Serine 357 bears the Phosphoserine mark. A compositionally biased stretch (pro residues) spans 366–382 (VPPPPETPMPPPLPPTP). Over residues 386–395 (IVRKDYDPKA) the composition is skewed to basic and acidic residues. Serine 411 carries the phosphoserine modification. Lysine 422 participates in a covalent cross-link: Glycyl lysine isopeptide (Lys-Gly) (interchain with G-Cter in SUMO2). Serine 449 is subject to Phosphoserine. The residue at position 454 (tyrosine 454) is a Phosphotyrosine. Over residues 486 to 500 (IGEEEIQKPEEKVTW) the composition is skewed to basic and acidic residues. 3 disordered regions span residues 486 to 516 (IGEE…AAQA), 528 to 582 (HKAK…AMPP), and 664 to 684 (PMPP…KKLK). Residue lysine 497 forms a Glycyl lysine isopeptide (Lys-Gly) (interchain with G-Cter in SUMO2) linkage. A Phosphoserine modification is found at serine 506. Over residues 507–516 (MARTQQAAQA) the composition is skewed to polar residues. Lysine 540 is covalently cross-linked (Glycyl lysine isopeptide (Lys-Gly) (interchain with G-Cter in SUMO2)). Residues 561 to 570 (ATNIPSSAPP) are compositionally biased toward polar residues. A compositionally biased stretch (pro residues) spans 664 to 673 (PMPPVHPPPP). The segment at 678–700 (PPSKKLKTEDSLMPEEEFLRRNK) is required and sufficient for nuclear import. Lysine 684 is covalently cross-linked (Glycyl lysine isopeptide (Lys-Gly) (interchain with G-Cter in SUMO2)). A Ubiquitin-like domain is found at 705–788 (IKVQVPNMQD…IHLALKERGG (84 aa)). Residue tyrosine 757 is modified to Phosphotyrosine.

As to quaternary structure, component of the 17S U2 SnRNP complex, a ribonucleoprotein complex that contains small nuclear RNA (snRNA) U2 and a number of specific proteins. Part of the SF3A subcomplex of the 17S U2 SnRNP complex which is composed of three subunits; SF3A3/SAP61, SF3A2/SAP62 and SF3A1/SAP114. SF3A associates with the splicing factor SF3B and a 12S RNA unit to form the mature 17S U2 small nuclear ribonucleoprotein complex (17S U2 snRNP). SF3A1 functions as a scaffold that interacts directly with both SF3A2 and SF3A3. Identified in the spliceosome 'E' complex, a precursor of the spliceosome 'A' complex. Identified in the spliceosome 'A' and 'B' complexes. Identified in the spliceosome 'C' complex. Interacts with P2RX6; resulting in a reduction of the splicing activity.

It is found in the nucleus. It localises to the nucleus speckle. In terms of biological role, component of the 17S U2 SnRNP complex of the spliceosome, a large ribonucleoprotein complex that removes introns from transcribed pre-mRNAs. The 17S U2 SnRNP complex (1) directly participates in early spliceosome assembly and (2) mediates recognition of the intron branch site during pre-mRNA splicing by promoting the selection of the pre-mRNA branch-site adenosine, the nucleophile for the first step of splicing. Within the 17S U2 SnRNP complex, SF3A1 is part of the SF3A subcomplex that contributes to the assembly of the 17S U2 snRNP, and the subsequent assembly of the pre-spliceosome 'E' complex and the pre-catalytic spliceosome 'A' complex. Involved in pre-mRNA splicing as a component of pre-catalytic spliceosome 'B' complexes. In Mus musculus (Mouse), this protein is Splicing factor 3A subunit 1 (Sf3a1).